A 439-amino-acid polypeptide reads, in one-letter code: Iron-sulfur cluster assembly factor IBA57 homolog, mitochondrial (439 aa).

The transit peptide at 1 to 72 directs the protein to the mitochondrion; that stretch reads MQPATRSIAV…RLISVSGPDA (72 aa).

Belongs to the GcvT family. CAF17/IBA57 subfamily.

It is found in the mitochondrion matrix. In Neurospora crassa (strain ATCC 24698 / 74-OR23-1A / CBS 708.71 / DSM 1257 / FGSC 987), this protein is Iron-sulfur cluster assembly factor IBA57 homolog, mitochondrial (caf-17).